A 371-amino-acid chain; its full sequence is Peptidyl-prolyl cis-trans isomerase D (371 aa).

Residues 11 to 172 (FFDIQIGNEK…KDVTIVECGE (162 aa)) enclose the PPIase cyclophilin-type domain. The segment at 175–195 (GQDYDDADKQTPDATGDPYED) is disordered. TPR repeat units lie at residues 214 to 247 (ASELKNFGNAAFKSGNLALGLEKYQKGLRYLHEF), 267 to 300 (FALHSNSSLLANKLAQYGNGRSWATYALDTANAA), and 308 to 341 (AKAYYRRAVASSGLKEEDEALKDLQEAEKLAPGD).

Belongs to the cyclophilin-type PPIase family. PPIase D subfamily.

It is found in the cytoplasm. The catalysed reaction is [protein]-peptidylproline (omega=180) = [protein]-peptidylproline (omega=0). Its function is as follows. PPIases accelerate the folding of proteins. It catalyzes the cis-trans isomerization of proline imidic peptide bonds in oligopeptides. This chain is Peptidyl-prolyl cis-trans isomerase D (cpr6), found in Aspergillus oryzae (strain ATCC 42149 / RIB 40) (Yellow koji mold).